The sequence spans 279 residues: Protein FAM151B (279 aa).

The protein belongs to the menorin family.

Functionally, essential for survival of retinal photoreceptor cells. The polypeptide is Protein FAM151B (Fam151b) (Mus musculus (Mouse)).